Here is a 485-residue protein sequence, read N- to C-terminus: UDP-N-acetylmuramate--L-alanine ligase (485 aa).

120–126 is a binding site for ATP; the sequence is GSHGKTT.

This sequence belongs to the MurCDEF family.

It localises to the cytoplasm. It catalyses the reaction UDP-N-acetyl-alpha-D-muramate + L-alanine + ATP = UDP-N-acetyl-alpha-D-muramoyl-L-alanine + ADP + phosphate + H(+). It participates in cell wall biogenesis; peptidoglycan biosynthesis. Cell wall formation. The protein is UDP-N-acetylmuramate--L-alanine ligase of Rickettsia rickettsii (strain Iowa).